A 203-amino-acid polypeptide reads, in one-letter code: Outer-membrane lipoprotein LolB (203 aa).

Residues 1–20 form the signal peptide; that stretch reads MNRSRRLALLCLGVPLLLQA. C21 carries the N-palmitoyl cysteine lipid modification. C21 carries S-diacylglycerol cysteine lipidation.

Belongs to the LolB family. Monomer.

It localises to the cell outer membrane. Plays a critical role in the incorporation of lipoproteins in the outer membrane after they are released by the LolA protein. The polypeptide is Outer-membrane lipoprotein LolB (Cupriavidus taiwanensis (strain DSM 17343 / BCRC 17206 / CCUG 44338 / CIP 107171 / LMG 19424 / R1) (Ralstonia taiwanensis (strain LMG 19424))).